Reading from the N-terminus, the 220-residue chain is Zinc finger protein 36 (220 aa).

Residues Phe73–His95 form a C2H2-type 1 zinc finger. The segment at Gly90–Pro134 is disordered. Positions Ala107–Ala117 are enriched in low complexity. The segment at His135–His157 adopts a C2H2-type 2 zinc-finger fold.

Probable transcription factor involved in abscisic acid (ABA) signaling. Required for the regulation of the cross-talk between NADPH oxidase, hydrogen peroxide and MAP kinase in ABA signaling. Regulates the expression of the NADPH oxidase genes RBOHB and RBOHE, and the MAPK genes MPK1, MPK4, MPK5, MPK7 and MPK14. Regulates ABA-induced hydrogen peroxide production and antioxidant defense. Required for tolerance to water stress and oxidative stress. This Oryza sativa subsp. japonica (Rice) protein is Zinc finger protein 36.